Here is a 721-residue protein sequence, read N- to C-terminus: Polyribonucleotide nucleotidyltransferase (721 aa).

Mg(2+) is bound by residues Asp486 and Asp492. The KH domain maps to 553-612 (PKIVQLQIDIDKISLVIGSTGKTVKAITDEFEVKVQIEQNGKIILFGDDDFKMQKAKERI). Residues 622-716 (GEIYEGIVKK…KFGKIDLEVV (95 aa)) enclose the S1 motif domain.

The protein belongs to the polyribonucleotide nucleotidyltransferase family. Mg(2+) serves as cofactor.

It is found in the cytoplasm. It catalyses the reaction RNA(n+1) + phosphate = RNA(n) + a ribonucleoside 5'-diphosphate. In terms of biological role, involved in mRNA degradation. Catalyzes the phosphorolysis of single-stranded polyribonucleotides processively in the 3'- to 5'-direction. This Borrelia garinii subsp. bavariensis (strain ATCC BAA-2496 / DSM 23469 / PBi) (Borreliella bavariensis) protein is Polyribonucleotide nucleotidyltransferase.